The primary structure comprises 67 residues: Large ribosomal subunit protein bL28 (67 aa).

The protein belongs to the bacterial ribosomal protein bL28 family.

The protein is Large ribosomal subunit protein bL28 of Nitratiruptor sp. (strain SB155-2).